Here is a 1005-residue protein sequence, read N- to C-terminus: Regulator of telomere elongation helicase 1 homolog (1005 aa).

In terms of domain architecture, Helicase ATP-binding spans 7 to 322; sequence AGIPVHFPFE…KEMLLELEKA (316 aa). 42 to 49 serves as a coordination point for ATP; the sequence is SPTGTGKT. [4Fe-4S] cluster is bound by residues Cys-145, Cys-163, Cys-172, and Cys-208. The DEAH box signature appears at 251–254; it reads DEAH. Position 876 is a phosphothreonine (Thr-876). The tract at residues 893-917 is disordered; it reads NGPLKTEPSEPATTSSSFCPTPAQS.

Belongs to the helicase family. RAD3/XPD subfamily.

The protein localises to the nucleus. It carries out the reaction ATP + H2O = ADP + phosphate + H(+). Functionally, a probable ATP-dependent DNA helicase implicated in DNA repair and the maintenance of genomic stability. Acts as an anti-recombinase to counteract toxic recombination and limit crossover during meiosis. Regulates meiotic recombination and crossover homeostasis by physically dissociating strand invasion events and thereby promotes noncrossover repair by meiotic synthesis dependent strand annealing (SDSA) as well as disassembly of D loop recombination intermediates. In Drosophila virilis (Fruit fly), this protein is Regulator of telomere elongation helicase 1 homolog.